The sequence spans 331 residues: Cathepsin 7 (331 aa).

Positions 1–17 (MTPTVFLSILCLGVALA) are cleaved as a signal peptide. A propeptide spans 18–111 (APAPDYNLDA…GKHIQKRNPK (94 aa)) (activation peptide). A Nuclear localization signal motif is present at residues 33-50 (KRSNDRTYSPEEEKQRRA). N-linked (GlcNAc...) asparagine glycosylation is present at N72. 3 disulfides stabilise this stretch: C133–C176, C167–C209, and C267–C320. C136 is a catalytic residue. Catalysis depends on residues H274 and N298.

This sequence belongs to the peptidase C1 family. In terms of tissue distribution, expressed in placenta. Expressed in parietal and spiral artery-associated trophoblast giant cells, most abundantly during the phase of trophoblast invasion. From 14.5 dpc onwards, expressed at lower levels in labyrinth trophoblast cells. Expressed in trophoblast stem cells. Expressed in heart, liver and testis.

The protein resides in the endosome. Its subcellular location is the lysosome. It is found in the cytoplasm. The protein localises to the perinuclear region. It localises to the golgi apparatus. The protein resides in the nucleus. Its subcellular location is the secreted. It is found in the extracellular space. Involved in trophoblast cell proliferation and differentiation probably by affecting mitotic cell cycle progression. Proteolytic activity and nuclear localization are essential for its role in cell cycle progression. This chain is Cathepsin 7, found in Mus musculus (Mouse).